The sequence spans 79 residues: Dolichyl-diphosphooligosaccharide--protein glycosyltransferase subunit TMEM258 (79 aa).

The residue at position 1 (M1) is an N-acetylmethionine. The next 2 helical transmembrane spans lie at 17–37 and 59–79; these read VFPH…AWFF and VASL…GIYI.

The protein belongs to the OST5 family. Component of the oligosaccharyltransferase (OST) complex. OST exists in two different complex forms which contain common core subunits RPN1, RPN2, OST48, OST4, DAD1 and TMEM258, either STT3A or STT3B as catalytic subunits, and form-specific accessory subunits. STT3A complex assembly occurs through the formation of 3 subcomplexes. Subcomplex 1 contains RPN1 and TMEM258, subcomplex 2 contains the STT3A-specific subunits STT3A, DC2/OSTC, and KCP2 as well as the core subunit OST4, and subcomplex 3 contains RPN2, DAD1, and OST48. The STT3A complex can form stable complexes with the Sec61 complex or with both the Sec61 and TRAP complexes.

The protein localises to the membrane. It localises to the endoplasmic reticulum. Its subcellular location is the cytoplasm. It functions in the pathway protein modification; protein glycosylation. Its function is as follows. Subunit of the oligosaccharyl transferase (OST) complex that catalyzes the initial transfer of a defined glycan (Glc(3)Man(9)GlcNAc(2) in eukaryotes) from the lipid carrier dolichol-pyrophosphate to an asparagine residue within an Asn-X-Ser/Thr consensus motif in nascent polypeptide chains, the first step in protein N-glycosylation. N-glycosylation occurs cotranslationally and the complex associates with the Sec61 complex at the channel-forming translocon complex that mediates protein translocation across the endoplasmic reticulum (ER). All subunits are required for a maximal enzyme activity. Involved in ER homeostasis in the colonic epithelium. This Bos taurus (Bovine) protein is Dolichyl-diphosphooligosaccharide--protein glycosyltransferase subunit TMEM258.